A 552-amino-acid chain; its full sequence is Urocanate hydratase (552 aa).

NAD(+)-binding positions include 49–50, Gln-127, 173–175, Asp-193, 239–240, 260–264, 270–271, and Tyr-319; these read GG, GMG, NA, QTSAH, and YV. The active site involves Cys-407. Gly-489 is a binding site for NAD(+).

It belongs to the urocanase family. NAD(+) is required as a cofactor.

Its subcellular location is the cytoplasm. The enzyme catalyses 4-imidazolone-5-propanoate = trans-urocanate + H2O. It functions in the pathway amino-acid degradation; L-histidine degradation into L-glutamate; N-formimidoyl-L-glutamate from L-histidine: step 2/3. In terms of biological role, catalyzes the conversion of urocanate to 4-imidazolone-5-propionate. The polypeptide is Urocanate hydratase (Bacillus cytotoxicus (strain DSM 22905 / CIP 110041 / 391-98 / NVH 391-98)).